The sequence spans 162 residues: SsrA-binding protein (162 aa).

The protein belongs to the SmpB family.

It is found in the cytoplasm. Its function is as follows. Required for rescue of stalled ribosomes mediated by trans-translation. Binds to transfer-messenger RNA (tmRNA), required for stable association of tmRNA with ribosomes. tmRNA and SmpB together mimic tRNA shape, replacing the anticodon stem-loop with SmpB. tmRNA is encoded by the ssrA gene; the 2 termini fold to resemble tRNA(Ala) and it encodes a 'tag peptide', a short internal open reading frame. During trans-translation Ala-aminoacylated tmRNA acts like a tRNA, entering the A-site of stalled ribosomes, displacing the stalled mRNA. The ribosome then switches to translate the ORF on the tmRNA; the nascent peptide is terminated with the 'tag peptide' encoded by the tmRNA and targeted for degradation. The ribosome is freed to recommence translation, which seems to be the essential function of trans-translation. The sequence is that of SsrA-binding protein from Buchnera aphidicola subsp. Acyrthosiphon pisum (strain 5A).